The following is a 177-amino-acid chain: Large ribosomal subunit protein uL6 (177 aa).

Residues 151–177 (KRPPEPYKGKGVKYADEHIRRKEGKKS) form a disordered region. Residues 152 to 177 (RPPEPYKGKGVKYADEHIRRKEGKKS) show a composition bias toward basic and acidic residues.

This sequence belongs to the universal ribosomal protein uL6 family. In terms of assembly, part of the 50S ribosomal subunit.

Functionally, this protein binds to the 23S rRNA, and is important in its secondary structure. It is located near the subunit interface in the base of the L7/L12 stalk, and near the tRNA binding site of the peptidyltransferase center. The protein is Large ribosomal subunit protein uL6 of Fusobacterium nucleatum subsp. nucleatum (strain ATCC 25586 / DSM 15643 / BCRC 10681 / CIP 101130 / JCM 8532 / KCTC 2640 / LMG 13131 / VPI 4355).